A 369-amino-acid polypeptide reads, in one-letter code: Choline-phosphate cytidylyltransferase B (369 aa).

The segment at 1-27 (MPVVTTDAESETGIPKSLSNEPPSETM) is disordered. 4 residues coordinate CTP: Ile-84, Phe-85, His-92, and Lys-122. Residues Lys-122 and Trp-151 each coordinate phosphocholine. His-168, Asp-169, Tyr-173, Gln-195, Arg-196, Thr-197, and Ile-200 together coordinate CTP. The interval 309–369 (RMLQALSPKQ…SMSEGDEDEK (61 aa)) is disordered. A phosphoserine mark is found at Ser-315, Ser-319, Ser-322, Ser-323, Ser-329, Ser-331, and Ser-335. Residues 319 to 339 (SPVSSPTRSRSPSRSPSPTFS) show a composition bias toward low complexity. Phosphothreonine is present on Thr-345. Phosphoserine is present on residues Ser-346, Ser-349, Ser-350, Ser-355, Ser-360, and Ser-362. The segment covering 351 to 362 (PKAASASISSMS) has biased composition (low complexity).

It belongs to the cytidylyltransferase family. As to quaternary structure, homodimer. In terms of processing, phosphorylated. Post-translationally, extensively phosphorylated. In terms of tissue distribution, highly expressed in testis, placenta, brain, ovary, liver and fetal lung. As to expression, expressed in brain, liver and fetal lung.

Its subcellular location is the cytoplasm. It is found in the endoplasmic reticulum. It catalyses the reaction phosphocholine + CTP + H(+) = CDP-choline + diphosphate. The protein operates within phospholipid metabolism; phosphatidylcholine biosynthesis; phosphatidylcholine from phosphocholine: step 1/2. In terms of biological role, catalyzes the key rate-limiting step in the CDP-choline pathway for phosphatidylcholine biosynthesis. The protein is Choline-phosphate cytidylyltransferase B (PCYT1B) of Homo sapiens (Human).